Consider the following 201-residue polypeptide: Ribonuclease HII (201 aa).

One can recognise an RNase H type-2 domain in the interval 10–200; it reads LIEAGCDEAG…LGDGQLELFS (191 aa). A divalent metal cation-binding residues include aspartate 16, glutamate 17, and aspartate 108.

This sequence belongs to the RNase HII family. Requires Mn(2+) as cofactor. Mg(2+) serves as cofactor.

The protein localises to the cytoplasm. The enzyme catalyses Endonucleolytic cleavage to 5'-phosphomonoester.. Its function is as follows. Endonuclease that specifically degrades the RNA of RNA-DNA hybrids. This Bacteroides fragilis (strain ATCC 25285 / DSM 2151 / CCUG 4856 / JCM 11019 / LMG 10263 / NCTC 9343 / Onslow / VPI 2553 / EN-2) protein is Ribonuclease HII.